Here is a 211-residue protein sequence, read N- to C-terminus: Uracil phosphoribosyltransferase (211 aa).

5-phospho-alpha-D-ribose 1-diphosphate-binding positions include Arg79, Arg104, and 131–139 (DPMLATGGS). Residues Ile196 and 201–203 (GDA) contribute to the uracil site. Asp202 provides a ligand contact to 5-phospho-alpha-D-ribose 1-diphosphate.

It belongs to the UPRTase family. It depends on Mg(2+) as a cofactor.

The catalysed reaction is UMP + diphosphate = 5-phospho-alpha-D-ribose 1-diphosphate + uracil. It participates in pyrimidine metabolism; UMP biosynthesis via salvage pathway; UMP from uracil: step 1/1. Allosterically activated by GTP. Catalyzes the conversion of uracil and 5-phospho-alpha-D-ribose 1-diphosphate (PRPP) to UMP and diphosphate. The polypeptide is Uracil phosphoribosyltransferase (Limosilactobacillus reuteri (strain DSM 20016) (Lactobacillus reuteri)).